The sequence spans 264 residues: Mitochondrial distribution and morphology protein 12 (264 aa).

One can recognise an SMP-LTD domain in the interval 1–232 (MSFDINWNKI…WPSWINLDFN (232 aa)). The segment at 240–264 (ESSSSAEESLPHRDDAQDFSADARA) is disordered. Residues 248-264 (SLPHRDDAQDFSADARA) are compositionally biased toward basic and acidic residues.

It belongs to the MDM12 family. In terms of assembly, component of the ER-mitochondria encounter structure (ERMES) or MDM complex, composed of MMM1, MDM10, MDM12 and MDM34. An MMM1 homodimer associates with one molecule of MDM12 on each side in a pairwise head-to-tail manner, and the SMP-LTD domains of MMM1 and MDM12 generate a continuous hydrophobic tunnel for phospholipid trafficking.

The protein resides in the mitochondrion outer membrane. It is found in the endoplasmic reticulum membrane. Component of the ERMES/MDM complex, which serves as a molecular tether to connect the endoplasmic reticulum (ER) and mitochondria. Components of this complex are involved in the control of mitochondrial shape and protein biogenesis, and function in nonvesicular lipid trafficking between the ER and mitochondria. MDM12 is required for the interaction of the ER-resident membrane protein MMM1 and the outer mitochondrial membrane-resident beta-barrel protein MDM10. The MDM12-MMM1 subcomplex functions in the major beta-barrel assembly pathway that is responsible for biogenesis of all mitochondrial outer membrane beta-barrel proteins, and acts in a late step after the SAM complex. The MDM10-MDM12-MMM1 subcomplex further acts in the TOM40-specific pathway after the action of the MDM12-MMM1 complex. Essential for establishing and maintaining the structure of mitochondria and maintenance of mtDNA nucleoids. The chain is Mitochondrial distribution and morphology protein 12 from Eremothecium gossypii (strain ATCC 10895 / CBS 109.51 / FGSC 9923 / NRRL Y-1056) (Yeast).